We begin with the raw amino-acid sequence, 290 residues long: Glycine--tRNA ligase alpha subunit (290 aa).

The protein belongs to the class-II aminoacyl-tRNA synthetase family. As to quaternary structure, tetramer of two alpha and two beta subunits.

It is found in the cytoplasm. It catalyses the reaction tRNA(Gly) + glycine + ATP = glycyl-tRNA(Gly) + AMP + diphosphate. The sequence is that of Glycine--tRNA ligase alpha subunit from Fusobacterium nucleatum subsp. nucleatum (strain ATCC 25586 / DSM 15643 / BCRC 10681 / CIP 101130 / JCM 8532 / KCTC 2640 / LMG 13131 / VPI 4355).